We begin with the raw amino-acid sequence, 360 residues long: sn-glycerol-3-phosphate import ATP-binding protein UgpC (360 aa).

The ABC transporter domain occupies 4–235 (LSLKGVKKSY…PATTFVASFI (232 aa)). 37-44 (GPSGCGKS) contacts ATP.

It belongs to the ABC transporter superfamily. sn-glycerol-3-phosphate importer (TC 3.A.1.1.3) family. The complex is composed of two ATP-binding proteins (UgpC), two transmembrane proteins (UgpA and UgpE) and a solute-binding protein (UgpB).

It localises to the cell inner membrane. The enzyme catalyses sn-glycerol 3-phosphate(out) + ATP + H2O = sn-glycerol 3-phosphate(in) + ADP + phosphate + H(+). Its function is as follows. Part of the ABC transporter complex UgpBAEC involved in sn-glycerol-3-phosphate (G3P) import. Responsible for energy coupling to the transport system. This Burkholderia mallei (strain ATCC 23344) protein is sn-glycerol-3-phosphate import ATP-binding protein UgpC.